Consider the following 328-residue polypeptide: Tetraacyldisaccharide 4'-kinase (328 aa).

55–62 lines the ATP pocket; that stretch reads TAGGNGKT.

It belongs to the LpxK family.

It catalyses the reaction a lipid A disaccharide + ATP = a lipid IVA + ADP + H(+). The protein operates within glycolipid biosynthesis; lipid IV(A) biosynthesis; lipid IV(A) from (3R)-3-hydroxytetradecanoyl-[acyl-carrier-protein] and UDP-N-acetyl-alpha-D-glucosamine: step 6/6. In terms of biological role, transfers the gamma-phosphate of ATP to the 4'-position of a tetraacyldisaccharide 1-phosphate intermediate (termed DS-1-P) to form tetraacyldisaccharide 1,4'-bis-phosphate (lipid IVA). The sequence is that of Tetraacyldisaccharide 4'-kinase from Escherichia coli O7:K1 (strain IAI39 / ExPEC).